Here is a 2642-residue protein sequence, read N- to C-terminus: Fusarielin synthase FSL1 (2642 aa).

The Ketosynthase family 3 (KS3) domain maps to 6 to 450 (NEPIAIIGTG…GTNAHAILEA (445 aa)). Residues C179, H318, and H370 each act as for beta-ketoacyl synthase activity in the active site. Residues 566–890 (VFTGQGAQWA…PYTSALVRGK (325 aa)) are malonyl-CoA:ACP transacylase (MAT) domain. S659 functions as the For malonyltransferase activity in the catalytic mechanism. Residues 965 to 1101 (HDLLGIQTAD…GKVCIFLQTE (137 aa)) are N-terminal hotdog fold. The dehydratase (DH) domain stretch occupies residues 965–1279 (HDLLGIQTAD…SFSPFAAATD (315 aa)). The PKS/mFAS DH domain occupies 965-1280 (HDLLGIQTAD…FSPFAAATDR (316 aa)). H997 serves as the catalytic Proton acceptor; for dehydratase activity. The tract at residues 1126–1280 (MAGIDVERFY…FSPFAAATDR (155 aa)) is C-terminal hotdog fold. D1189 acts as the Proton donor; for dehydratase activity in catalysis. The tract at residues 1423–1622 (NYLDRYYTHA…GVDTNTPMPD (200 aa)) is methyltransferase (MET) domain. The segment at 2244-2423 (TYWMLGLTGD…GHNAAVIDIS (180 aa)) is ketoreductase (KR) domain. The Carrier domain occupies 2556–2635 (QEVTSVLTSC…DLADYILESL (80 aa)). O-(pantetheine 4'-phosphoryl)serine is present on S2595.

It depends on pantetheine 4'-phosphate as a cofactor.

It participates in secondary metabolite biosynthesis. Functionally, reducing polyketide synthase; part of the gene cluster that mediates the biosynthesis of fusarielins F, G and H, decaketide compounds with 5 methylations and a decaline core that act as mycoestrogens as they stimulate growth of MCF-7 breast cancer cells. The initial compound in the pathway is produced by the reducing polyketide synthase FSL1. FSL1 lacks an active enoyl reductase (ER) domain and biosynthesis of fusarielins relies on the trans-acting enoyl reductase FSL5, before it is released through hydrolysis catalyzed by the thioesterase FSL2. Fusarielins F, G, and H have a C11=C12 cis double bond and is fully reduced between C10 and C11 and between C12 and C13. FSL3 can be involved in the formation of the C11=C12 cis double bond by moving a hypothetical C10=C11 or C12=C13 trans double bond to form prefusarielin. Prefusarielin is oxygenated at C15 and C16 by the cytochrome P450 monooxygenase FSL4, resulting in fusarielin F, which subsequently is epoxidized into fusarielin G by the same enzyme. The final step in the pathway is a reduction of the carboxylic acid moiety to yield fusarielin H via a still undetermined mechanism. This chain is Fusarielin synthase FSL1, found in Gibberella zeae (strain ATCC MYA-4620 / CBS 123657 / FGSC 9075 / NRRL 31084 / PH-1) (Wheat head blight fungus).